The primary structure comprises 163 residues: Ribonuclease H (163 aa).

The region spanning 4 to 146 (SPKKVLIYTD…CDRLAVRASQ (143 aa)) is the RNase H type-1 domain. 4 residues coordinate Mg(2+): D13, E51, D73, and D138.

Belongs to the RNase H family. In terms of assembly, monomer. The cofactor is Mg(2+).

The protein localises to the cytoplasm. It catalyses the reaction Endonucleolytic cleavage to 5'-phosphomonoester.. Endonuclease that specifically degrades the RNA of RNA-DNA hybrids. The protein is Ribonuclease H of Rippkaea orientalis (strain PCC 8801 / RF-1) (Cyanothece sp. (strain PCC 8801)).